A 335-amino-acid chain; its full sequence is Galactosylgalactosylxylosylprotein 3-beta-glucuronosyltransferase 3 (335 aa).

The Cytoplasmic portion of the chain corresponds to 1 to 7 (MKLKLKN). The chain crosses the membrane as a helical; Signal-anchor for type II membrane protein span at residues 8-28 (VFLAYFLVSIAGLLYALVQLG). Topologically, residues 29–335 (QPCDCLPPLR…GRGSDPAIEV (307 aa)) are lumenal. UDP-alpha-D-glucuronate contacts are provided by residues 82-84 (PTY), D113, R156, R161, and 194-196 (DDD). Residue D196 participates in Mn(2+) binding. The interval 243–252 (WEPSRPFPVD) is interaction with galactose moiety of substrate glycoprotein. E281 acts as the Proton donor/acceptor in catalysis. N-linked (GlcNAc...) asparagine glycosylation occurs at N300. 308 to 310 (HTR) contributes to the UDP-alpha-D-glucuronate binding site. Positions 312-322 (EKPKMKQEEQL) are enriched in basic and acidic residues. Residues 312–335 (EKPKMKQEEQLQRQGRGSDPAIEV) form a disordered region.

This sequence belongs to the glycosyltransferase 43 family. In terms of assembly, homodimer; disulfide-linked. Interacts with PXYLP1; the interaction increases the 2-phosphoxylose phosphatase activity of PXYLP1 during completion of linkage region formation in a B3GAT3-mediated manner. Mn(2+) serves as cofactor. In terms of processing, N-glycosylated. Ubiquitous (but weakly expressed in all tissues examined).

The protein localises to the golgi apparatus membrane. It localises to the golgi apparatus. Its subcellular location is the cis-Golgi network. The catalysed reaction is 3-O-(beta-D-galactosyl-(1-&gt;3)-beta-D-galactosyl-(1-&gt;4)-beta-D-xylosyl)-L-seryl-[protein] + UDP-alpha-D-glucuronate = 3-O-(beta-D-GlcA-(1-&gt;3)-beta-D-Gal-(1-&gt;3)-beta-D-Gal-(1-&gt;4)-beta-D-Xyl)-L-seryl-[protein] + UDP + H(+). Its pathway is protein modification; protein glycosylation. With respect to regulation, inhibited by EDTA. In terms of biological role, glycosaminoglycans biosynthesis. Involved in forming the linkage tetrasaccharide present in heparan sulfate and chondroitin sulfate. Transfers a glucuronic acid moiety from the uridine diphosphate-glucuronic acid (UDP-GlcUA) to the common linkage region trisaccharide Gal-beta-1,3-Gal-beta-1,4-Xyl covalently bound to a Ser residue at the glycosaminylglycan attachment site of proteoglycans. Can also play a role in the biosynthesis of l2/HNK-1 carbohydrate epitope on glycoproteins. Shows strict specificity for Gal-beta-1,3-Gal-beta-1,4-Xyl, exhibiting negligible incorporation into other galactoside substrates including Galbeta1-3Gal beta1-O-benzyl, Galbeta1-4GlcNAc and Galbeta1-4Glc. Stimulates 2-phosphoxylose phosphatase activity of PXYLP1 in presence of uridine diphosphate-glucuronic acid (UDP-GlcUA) during completion of linkage region formation. This is Galactosylgalactosylxylosylprotein 3-beta-glucuronosyltransferase 3 (B3GAT3) from Homo sapiens (Human).